Here is a 438-residue protein sequence, read N- to C-terminus: Acyl-CoA dehydrogenase apdG (438 aa).

This sequence belongs to the acyl-CoA dehydrogenase family. The cofactor is FAD.

It functions in the pathway secondary metabolite biosynthesis. In terms of biological role, acyl-CoA dehydrogenase; part of the gene cluster that mediates the biosynthesis of aspyridones. The polyketide-amino acid backbone preaspyridone A is first assembled by the PKS-NRPS hybrid apdA. The assembly of preaspyridone A is initiated by loading of malonyl-CoA onto apdA, followed by decarboxylation to yield the acetyl starter unit. The growing polyketide chain then elongates into a tetraketide. The adpA PKS module catalyzes three Claisen condensations, as well as beta-keto processing and methylation. Alpha-methylation step during polyketide synthesis is a prerequisite and a key checkpoint for chain transfer between PKS and NRPS modules. The downstream NRPS module contains the condensation (C), adenylation (A), and thiolation (T) domains and catalyzes the incorporation of tyrosine via the formation of the L-tyrosinyl-thioester and the amide linkage between L-tyrosinyl-thioester and the tetraketide. The bimodular assembly line is terminated with a reductase (R) domain that facilitates formation and release of the tetramic acid product. Because apdA lacks a designated enoylreductase (ER) domain, the required activity is provided the enoyl reductase apdC. ApdC appears to operate with different stereoselectivity in different PKS cycle. Combined with apdC, apdA is proposed to synthesize preaspyridone A via about 20 enzymatic steps. A number of oxidative steps performed successively by the cytochrome P450 monooxygenases apdE and apdB are required for the conversion of preaspyridone A to aspyridone A. The cytochrome P450 monooxygenase apdE is responsible for the oxidative dephenylation of preaspyridone A. Finally, the predicted FAD-dependent monooxygenase apdD and the acyl-CoA dehydrogenase apdG may be involved in the transformation of aspyridone A into aspyridone B. The chain is Acyl-CoA dehydrogenase apdG from Emericella nidulans (strain FGSC A4 / ATCC 38163 / CBS 112.46 / NRRL 194 / M139) (Aspergillus nidulans).